Consider the following 297-residue polypeptide: B-lymphocyte antigen CD20 (297 aa).

The Cytoplasmic segment spans residues 1–56; it reads MTTPRNSVNGTFPAEPMKGPIAMQSGPKPLFRRMSSLVGPTQSFFMRESKTLGAVQ. Ser36 bears the Phosphoserine mark. A helical transmembrane segment spans residues 57-78; it reads IMNGLFHIALGGLLMIPAGIYA. The epitope 1 stretch occupies residues 74 to 80; it reads AGIYAPI. Over 79-84 the chain is Extracellular; that stretch reads PICVTV. Residues 85-105 traverse the membrane as a helical segment; that stretch reads WYPLWGGIMYIISGSLLAATE. At 106-120 the chain is on the cytoplasmic side; that stretch reads KNSRKCLVKGKMIMN. Cys111 is lipidated: S-palmitoyl cysteine. A helical membrane pass occupies residues 121 to 141; it reads SLSLFAAISGMILSIMDILNI. Residues 142 to 188 are Extracellular-facing; it reads KISHFLKMESLNFIRAHTPYINIYNCEPANPSEKNSPSTQYCYSIQS. The segment at 146-160 is epitope 2; it reads FLKMESLNFIRAHTP. An intrachain disulfide couples Cys167 to Cys183. The tract at residues 168–175 is epitope 3 (recognized by antibodies, including Rituximab); the sequence is EPANPSEK. Residues 189-209 form a helical membrane-spanning segment; the sequence is LFLGILSVMLIFAFFQELVIA. At 210–297 the chain is on the cytoplasmic side; the sequence is GIVENEWKRT…SSPIENDSSP (88 aa). Cys220 is lipidated: S-palmitoyl cysteine. Ser225 is subject to Phosphoserine. A Phosphothreonine modification is found at Thr239. The segment at 247 to 297 is disordered; it reads VGLTETSSQPKNEEDIEIIPIQEEEEEETETNFPEPPQDQESSPIENDSSP. Acidic residues predominate over residues 260 to 276; sequence EDIEIIPIQEEEEEETE. Polar residues predominate over residues 285-297; it reads DQESSPIENDSSP.

It belongs to the MS4A family. As to quaternary structure, forms homotetramers. Interacts with the heavy and light chains of cell surface IgM, the antigen-binding components of the BCR. In terms of processing, phosphorylated on serines and threonines in resting B-cells. Protein kinase C/PKC can use CD20 as substrate. Expressed on B-cells.

It localises to the cell membrane. In terms of biological role, B-lymphocyte-specific membrane protein that plays a role in the regulation of cellular calcium influx necessary for the development, differentiation, and activation of B-lymphocytes. Functions as a store-operated calcium (SOC) channel component promoting calcium influx after activation by the B-cell receptor/BCR. The sequence is that of B-lymphocyte antigen CD20 (MS4A1) from Homo sapiens (Human).